The primary structure comprises 153 residues: Lipoprotein signal peptidase (153 aa).

2 consecutive transmembrane segments (helical) span residues 52–72 (ILAGQMWFFYVITIAVIIGIV) and 81–101 (GQMLLGISLGLMLGGAAGNFI). Active-site residues include D111 and D129. A helical transmembrane segment spans residues 124 to 144 (IFNIADSSLCVGVILLFIHML).

This sequence belongs to the peptidase A8 family.

It localises to the cell membrane. It catalyses the reaction Release of signal peptides from bacterial membrane prolipoproteins. Hydrolyzes -Xaa-Yaa-Zaa-|-(S,diacylglyceryl)Cys-, in which Xaa is hydrophobic (preferably Leu), and Yaa (Ala or Ser) and Zaa (Gly or Ala) have small, neutral side chains.. The protein operates within protein modification; lipoprotein biosynthesis (signal peptide cleavage). In terms of biological role, this protein specifically catalyzes the removal of signal peptides from prolipoproteins. This chain is Lipoprotein signal peptidase, found in Bacillus velezensis (strain DSM 23117 / BGSC 10A6 / LMG 26770 / FZB42) (Bacillus amyloliquefaciens subsp. plantarum).